We begin with the raw amino-acid sequence, 472 residues long: Phenylalanine--tRNA ligase, mitochondrial (472 aa).

Substrate-binding positions include 157 to 160 (SAHQ), arginine 179, 186 to 188 (QHY), and 193 to 195 (QLE). Residue lysine 202 is modified to N6-acetyllysine. 2 residues coordinate substrate: glutamate 287 and phenylalanine 312. Positions 379-471 (SKYPAVFNDI…AVQLLGVEGR (93 aa)) constitute an FDX-ACB domain.

It belongs to the class-II aminoacyl-tRNA synthetase family. In terms of assembly, monomer. In terms of tissue distribution, mainly expressed in the Purkinje cell of cerebellum.

It is found in the mitochondrion matrix. It localises to the mitochondrion. The catalysed reaction is tRNA(Phe) + L-phenylalanine + ATP = L-phenylalanyl-tRNA(Phe) + AMP + diphosphate + H(+). Its function is as follows. Is responsible for the charging of tRNA(Phe) with phenylalanine in mitochondrial translation. To a lesser extent, also catalyzes direct attachment of m-Tyr (an oxidized version of Phe) to tRNA(Phe), thereby opening the way for delivery of the misacylated tRNA to the ribosome and incorporation of ROS-damaged amino acid into proteins. In Rattus norvegicus (Rat), this protein is Phenylalanine--tRNA ligase, mitochondrial (Fars2).